The sequence spans 434 residues: Asparagine--tRNA ligase (434 aa).

It belongs to the class-II aminoacyl-tRNA synthetase family.

It is found in the cytoplasm. It catalyses the reaction tRNA(Asn) + L-asparagine + ATP = L-asparaginyl-tRNA(Asn) + AMP + diphosphate + H(+). The sequence is that of Asparagine--tRNA ligase (asnS) from Pyrococcus furiosus (strain ATCC 43587 / DSM 3638 / JCM 8422 / Vc1).